A 219-amino-acid chain; its full sequence is Claudin-6 (219 aa).

Residues 1-7 (MASTGLQ) lie on the Cytoplasmic side of the membrane. Residues 8–28 (ILGIVLTLLGWVNALVSCALP) traverse the membrane as a helical segment. At 29-81 (MWKVTAFIGNSIVVAQMVWEGLWMSCVVQSTGQMQCKVYDSLLALPQDLQAAR) the chain is on the extracellular side. Residues 82–102 (ALCVVTLLIVLLGLLVYLAGA) form a helical membrane-spanning segment. At 103–116 (KCTTCVEDRNSKSR) the chain is on the cytoplasmic side. The helical transmembrane segment at 117 to 137 (LVLISGIIFVISGVLTLIPVC) threads the bilayer. The Extracellular portion of the chain corresponds to 138-163 (WTAHSIIQDFYNPLVADAQKRELGAS). Residues 164 to 184 (LYLGWAASGLLLLGGGLLCCA) traverse the membrane as a helical segment. The Cytoplasmic portion of the chain corresponds to 185-219 (CSSGGTQGPRHYMACYSTSVPHSRGPSEYPTKNYV). A phosphoserine mark is found at S201, S203, S207, and S211. The tract at residues 218 to 219 (YV) is interactions with TJP1, TJP2 and TJP3.

This sequence belongs to the claudin family. In terms of assembly, directly interacts with TJP1/ZO-1, TJP2/ZO-2 and TJP3/ZO-3. Interacts with CLDN1, CD81 and OCLN. As to expression, expressed mostly in embryonic tissues.

It is found in the cell junction. It localises to the tight junction. Its subcellular location is the cell membrane. Its function is as follows. Plays a major role in tight junction-specific obliteration of the intercellular space, through calcium-independent cell-adhesion activity. This Mus musculus (Mouse) protein is Claudin-6 (Cldn6).